We begin with the raw amino-acid sequence, 522 residues long: ARS-binding protein 1 (522 aa).

Residues 70–144 (DVKRNRPPKY…RKRHILHAIN (75 aa)) enclose the HTH CENPB-type domain. T460 is modified (phosphothreonine).

Interacts with mcm10.

Its subcellular location is the nucleus. Binds, preferentially, to the Maundrell ARS consensus sequence within ARS3002. The sequence is that of ARS-binding protein 1 (abp1) from Schizosaccharomyces pombe (strain 972 / ATCC 24843) (Fission yeast).